The following is a 251-amino-acid chain: Ribonuclease PH (251 aa).

Phosphate-binding positions include Arg-90 and 128–130 (GTR).

This sequence belongs to the RNase PH family. Homohexameric ring arranged as a trimer of dimers.

It carries out the reaction tRNA(n+1) + phosphate = tRNA(n) + a ribonucleoside 5'-diphosphate. Its function is as follows. Phosphorolytic 3'-5' exoribonuclease that plays an important role in tRNA 3'-end maturation. Removes nucleotide residues following the 3'-CCA terminus of tRNAs; can also add nucleotides to the ends of RNA molecules by using nucleoside diphosphates as substrates, but this may not be physiologically important. Probably plays a role in initiation of 16S rRNA degradation (leading to ribosome degradation) during starvation. This chain is Ribonuclease PH, found in Leifsonia xyli subsp. xyli (strain CTCB07).